The primary structure comprises 286 residues: Thiamine-monophosphate kinase (286 aa).

Asp-22, Ser-36, Thr-37, and Asp-38 together coordinate Mg(2+). Asp-45 lines the substrate pocket. Positions 66 and 111 each coordinate Mg(2+). Residues 110–111 (GD) and Arg-136 contribute to the ATP site. Residue Asp-191 coordinates Mg(2+). ATP is bound at residue Ser-193. Asp-194 contacts Mg(2+). Residue Tyr-282 coordinates substrate.

This sequence belongs to the thiamine-monophosphate kinase family.

The enzyme catalyses thiamine phosphate + ATP = thiamine diphosphate + ADP. Its pathway is cofactor biosynthesis; thiamine diphosphate biosynthesis; thiamine diphosphate from thiamine phosphate: step 1/1. Its function is as follows. Catalyzes the ATP-dependent phosphorylation of thiamine-monophosphate (TMP) to form thiamine-pyrophosphate (TPP), the active form of vitamin B1. The polypeptide is Thiamine-monophosphate kinase (Methanospirillum hungatei JF-1 (strain ATCC 27890 / DSM 864 / NBRC 100397 / JF-1)).